A 140-amino-acid chain; its full sequence is Putative membrane protein ORF7 (140 aa).

A helical transmembrane segment spans residues 44–60 (TCAVSFFALFMLIIWVL). A disordered region spans residues 66 to 118 (PEGSTTRGTDAHTQTEGSTTRGTDAHTQTEGSRDQGSMTPEADDLTRPPLGHG). Polar residues predominate over residues 68–103 (GSTTRGTDAHTQTEGSTTRGTDAHTQTEGSRDQGSM).

The protein resides in the membrane. The polypeptide is Putative membrane protein ORF7 (ORF7) (Ictalurid herpesvirus 1 (strain Auburn) (IcHV-1)).